Reading from the N-terminus, the 66-residue chain is Large ribosomal subunit protein bL35 (66 aa).

Basic residues predominate over residues 24–43 (HKKAGKRHNLSKKSKARKRR). The disordered stretch occupies residues 24–44 (HKKAGKRHNLSKKSKARKRRL).

The protein belongs to the bacterial ribosomal protein bL35 family.

The protein is Large ribosomal subunit protein bL35 of Dictyoglomus thermophilum (strain ATCC 35947 / DSM 3960 / H-6-12).